Consider the following 29-residue polypeptide: Potassium channel toxin alpha-KTx 3.15 (29 aa).

C8 and C27 are oxidised to a cystine.

It belongs to the short scorpion toxin superfamily. Potassium channel inhibitor family. Alpha-KTx 03 subfamily. Expressed by the venom gland.

Its subcellular location is the secreted. In terms of biological role, may play a role in blocking voltage-gated potassium channels Kv1.1/KCNA1, Kv1.3/KCNA3 and Kv1.6/KCNA6. This Mesobuthus gibbosus (Mediterranean checkered scorpion) protein is Potassium channel toxin alpha-KTx 3.15.